The sequence spans 420 residues: FAD-dependent monooxygenase ntnJ (420 aa).

A helical transmembrane segment spans residues 12-31 (FRVIVVGAGIGGLSAAVALA). 2 residues coordinate FAD: glutamate 41 and alanine 54. A glycan (N-linked (GlcNAc...) asparagine) is linked at asparagine 124. Residue arginine 187 is part of the active site. Residue asparagine 264 is glycosylated (N-linked (GlcNAc...) asparagine). FAD-binding residues include aspartate 302 and valine 315.

It belongs to the paxM FAD-dependent monooxygenase family. Requires FAD as cofactor.

It localises to the membrane. Its pathway is secondary metabolite biosynthesis; terpenoid biosynthesis. FAD-dependent monooxygenase; part of the gene cluster that mediates the biosynthesis of the meroterpenoids nectripenoids A and B, as well as cochliquninone D and isocochliquninone E. The pathway probably begins with the HR-PKS ntnH that catalyzes two chain-extension steps to form a reduced triketide, which then primes the SAT domain in the NR-PKS ntnG to initiate three more cycles of extension to give a linear hexaketide corresponding to the polyketide part of nectripenoids. The FAD-dependent monooxygenase ntnJ then performs an oxidative decarboxylation at C11 of the ntnH/ntnG product, via an electrophilic aromatic hydroxylation with concomitant ipso-decarboxylation. The membrane-bound polyprenyl transferase ntnF then introduces a farnesyl group before the FAD-dependent monooxygenase ntnK functions as the first epoxidase on terminal C12'-C13' olefin, followed by a second epoxidation on C7'-C8' catalyzed by ntnA. The terpene cyclase/mutase ntnI then initiates the sequential tricyclic ring formation through protonation of the terminal epoxide and catalyzes the regioselective and stereoselective 6/6/6-tricyclic ring formation. The cytochrome P450 monooxygenase ntnM may then hydroxylate C1'. The polypeptide is FAD-dependent monooxygenase ntnJ (Nectria sp).